A 347-amino-acid polypeptide reads, in one-letter code: Ryncolin-3 (347 aa).

The signal sequence occupies residues 1–19; that stretch reads MKPWAAFHLIFLVASSVEG. The 58-residue stretch at 57–114 folds into the Collagen-like domain; the sequence is GIPGVPGINGSEGLKGDPGPQGLPGETGFDGIPGVAGPKGDKGDQGDKGDKGDKGDKG. The disordered stretch occupies residues 62 to 115; the sequence is PGINGSEGLKGDPGPQGLPGETGFDGIPGVAGPKGDKGDQGDKGDKGDKGDKGD. Over residues 95 to 115 the composition is skewed to basic and acidic residues; that stretch reads KGDKGDQGDKGDKGDKGDKGD. The region spanning 121–341 is the Fibrinogen C-terminal domain; it reads DCPPTDVEVR…YADMKIRPQQ (221 aa). 2 disulfides stabilise this stretch: C132–C160 and C284–C297.

It belongs to the ficolin lectin family. Veficolin subfamily. Hydroxylated. As to expression, expressed by the venom duct.

It is found in the secreted. Its function is as follows. Initiates complement activation and/or interferes in platelet aggregation and/or blood coagulation. The polypeptide is Ryncolin-3 (Cerberus rynchops (Dog-faced water snake)).